Consider the following 73-residue polypeptide: EAGEDCDCGSPANPCCDAATCKLLPGAQCGEGLCCDQCSFMKKGTICRRARGDDLDDYCNGISAGCPRNPLHA.

Positions 1–73 (EAGEDCDCGS…AGCPRNPLHA (73 aa)) constitute a Disintegrin domain. 6 disulfide bridges follow: cysteine 6–cysteine 21, cysteine 8–cysteine 16, cysteine 15–cysteine 38, cysteine 29–cysteine 35, cysteine 34–cysteine 59, and cysteine 47–cysteine 66. The Cell attachment site signature appears at 51 to 53 (RGD).

The protein belongs to the venom metalloproteinase (M12B) family. P-II subfamily. P-IIa sub-subfamily. In terms of assembly, monomer (disintegrin). In terms of tissue distribution, expressed by the venom gland.

Its subcellular location is the secreted. Functionally, inhibits fibrinogen interaction with platelets. Acts by binding to alpha-IIb/beta-3 (ITGA2B/ITGB3) on the platelet surface and inhibits aggregation induced by ADP, thrombin, platelet-activating factor and collagen. This is Disintegrin trigramin-gamma from Craspedocephalus gramineus (Bamboo pit viper).